The following is a 485-amino-acid chain: Glutamyl-tRNA(Gln) amidotransferase subunit A (485 aa).

Active-site charge relay system residues include Lys-78 and Ser-153. The Acyl-ester intermediate role is filled by Ser-177.

The protein belongs to the amidase family. GatA subfamily. As to quaternary structure, heterotrimer of A, B and C subunits.

It carries out the reaction L-glutamyl-tRNA(Gln) + L-glutamine + ATP + H2O = L-glutaminyl-tRNA(Gln) + L-glutamate + ADP + phosphate + H(+). In terms of biological role, allows the formation of correctly charged Gln-tRNA(Gln) through the transamidation of misacylated Glu-tRNA(Gln) in organisms which lack glutaminyl-tRNA synthetase. The reaction takes place in the presence of glutamine and ATP through an activated gamma-phospho-Glu-tRNA(Gln). This chain is Glutamyl-tRNA(Gln) amidotransferase subunit A, found in Bacillus cytotoxicus (strain DSM 22905 / CIP 110041 / 391-98 / NVH 391-98).